A 194-amino-acid polypeptide reads, in one-letter code: Ribonuclease HII (194 aa).

Residues 3 to 193 (ILTAGVDEAG…VRNLFAQQAL (191 aa)) form the RNase H type-2 domain. Residues Asp-9, Glu-10, and Asp-101 each coordinate a divalent metal cation.

Belongs to the RNase HII family. It depends on Mn(2+) as a cofactor. The cofactor is Mg(2+).

The protein resides in the cytoplasm. It catalyses the reaction Endonucleolytic cleavage to 5'-phosphomonoester.. Its function is as follows. Endonuclease that specifically degrades the RNA of RNA-DNA hybrids. The polypeptide is Ribonuclease HII (Neisseria meningitidis serogroup C / serotype 2a (strain ATCC 700532 / DSM 15464 / FAM18)).